The primary structure comprises 123 residues: UPF0102 protein CLJ_B2665 (123 aa).

Belongs to the UPF0102 family.

The chain is UPF0102 protein CLJ_B2665 from Clostridium botulinum (strain 657 / Type Ba4).